Reading from the N-terminus, the 132-residue chain is Small ribosomal subunit protein uS8 (132 aa).

Belongs to the universal ribosomal protein uS8 family. Part of the 30S ribosomal subunit. Contacts proteins S5 and S12.

Functionally, one of the primary rRNA binding proteins, it binds directly to 16S rRNA central domain where it helps coordinate assembly of the platform of the 30S subunit. This chain is Small ribosomal subunit protein uS8, found in Staphylococcus aureus (strain USA300).